A 419-amino-acid chain; its full sequence is Pyrophosphate--fructose 6-phosphate 1-phosphotransferase (419 aa).

A diphosphate-binding site is contributed by G12. D107 is a binding site for Mg(2+). Substrate-binding positions include 132 to 134 (TID), 178 to 180 (MGR), E238, and 300 to 303 (YELR). D134 acts as the Proton acceptor in catalysis.

Belongs to the phosphofructokinase type A (PFKA) family. PPi-dependent PFK group II subfamily. Clade 'Short' sub-subfamily. In terms of assembly, homodimer. The cofactor is Mg(2+). Co(2+) serves as cofactor. Requires Mn(2+) as cofactor. Ni(2+) is required as a cofactor.

The protein resides in the cytoplasm. The enzyme catalyses beta-D-fructose 6-phosphate + diphosphate = beta-D-fructose 1,6-bisphosphate + phosphate + H(+). It participates in carbohydrate degradation; glycolysis; D-glyceraldehyde 3-phosphate and glycerone phosphate from D-glucose: step 3/4. Non-allosteric. Catalyzes the phosphorylation of D-fructose 6-phosphate, the first committing step of glycolysis. Uses inorganic phosphate (PPi) as phosphoryl donor instead of ATP like common ATP-dependent phosphofructokinases (ATP-PFKs), which renders the reaction reversible, and can thus function both in glycolysis and gluconeogenesis. Consistently, PPi-PFK can replace the enzymes of both the forward (ATP-PFK) and reverse (fructose-bisphosphatase (FBPase)) reactions. The sequence is that of Pyrophosphate--fructose 6-phosphate 1-phosphotransferase from Thermotoga maritima (strain ATCC 43589 / DSM 3109 / JCM 10099 / NBRC 100826 / MSB8).